A 132-amino-acid chain; its full sequence is Small ribosomal subunit protein uS8 (132 aa).

Belongs to the universal ribosomal protein uS8 family. Part of the 30S ribosomal subunit. Contacts proteins S5 and S12.

Functionally, one of the primary rRNA binding proteins, it binds directly to 16S rRNA central domain where it helps coordinate assembly of the platform of the 30S subunit. This is Small ribosomal subunit protein uS8 from Xylella fastidiosa (strain 9a5c).